Consider the following 410-residue polypeptide: Arginine deiminase (410 aa).

The active-site Amidino-cysteine intermediate is C400.

The protein belongs to the arginine deiminase family.

It is found in the cytoplasm. It carries out the reaction L-arginine + H2O = L-citrulline + NH4(+). Its pathway is amino-acid degradation; L-arginine degradation via ADI pathway; carbamoyl phosphate from L-arginine: step 1/2. The chain is Arginine deiminase from Streptococcus uberis (strain ATCC BAA-854 / 0140J).